Reading from the N-terminus, the 133-residue chain is Helix-loop-helix protein 1 (133 aa).

The segment at methionine 1 to alanine 79 is disordered. A compositionally biased stretch (gly residues) spans aspartate 25–alanine 45. Residues glutamate 52–glutamate 65 are compositionally biased toward basic and acidic residues. The span at arginine 66–alanine 79 shows a compositional bias: basic residues. The 53-residue stretch at lysine 75 to leucine 127 folds into the bHLH domain.

In terms of assembly, efficient DNA binding requires dimerization with another bHLH protein.

It localises to the nucleus. In terms of biological role, may serve as DNA-binding protein and may be involved in the control of cell-type determination, possibly within the developing nervous system. This chain is Helix-loop-helix protein 1 (NHLH1), found in Homo sapiens (Human).